Reading from the N-terminus, the 573-residue chain is Thiol:disulfide interchange protein DsbD (573 aa).

The N-terminal stretch at 1–20 (MLKRFFLLLSSLLLVCNVQA) is a signal peptide. Residues 21–175 (GLFNNKPQYL…AENLSNNYLS (155 aa)) lie on the Periplasmic side of the membrane. Cystine bridges form between Cys-121/Cys-126 and Cys-191/Cys-313. The helical transmembrane segment at 176-196 (IFGFLLLGIGLAFTPCVLPML) threads the bilayer. The Cytoplasmic segment spans residues 197–227 (PLLSAIVIGHKNRPNTSRALLLSFTYVQGMA). Residues 228-248 (LTYTLLGLTVAAIGLPFQVAL) form a helical membrane-spanning segment. Residues 249-251 (QSP) lie on the Periplasmic side of the membrane. Residues 252 to 272 (AVLISLAVLFTLLAASMFGLF) traverse the membrane as a helical segment. The Cytoplasmic segment spans residues 273 to 292 (EIRLPNTWQQKLNALSQQQQ). A helical membrane pass occupies residues 293-313 (GGAVGNVFIMGIIAGLVASPC). Over 314–331 (TSAPLSGALLYVAQSGNL) the chain is Periplasmic. A helical transmembrane segment spans residues 332-352 (LIGGLALYLLALGMGLPLILI). Topologically, residues 353-365 (TVFGNQILPKSGE) are cytoplasmic. The helical transmembrane segment at 366 to 386 (WLFKVKTAFGFVMLALPIFLI) threads the bilayer. At 387–393 (SRILPSH) the chain is on the periplasmic side. A helical membrane pass occupies residues 394–414 (YEPFLWSTLALAFLGWLISSL). Topologically, residues 415–425 (NYSTMLKQAVR) are cytoplasmic. A helical membrane pass occupies residues 426 to 446 (ILLFIAFGLTAYPWANLVWQT). A Thioredoxin domain is found at 440–573 (ANLVWQTTSN…NQFLAWLNRL (134 aa)). Residues 447–573 (TSNTAQPTTP…NQFLAWLNRL (127 aa)) lie on the Periplasmic side of the membrane. Cys-490 and Cys-493 are joined by a disulfide.

Belongs to the thioredoxin family. DsbD subfamily.

It localises to the cell inner membrane. The catalysed reaction is [protein]-dithiol + NAD(+) = [protein]-disulfide + NADH + H(+). The enzyme catalyses [protein]-dithiol + NADP(+) = [protein]-disulfide + NADPH + H(+). Its function is as follows. Required to facilitate the formation of correct disulfide bonds in some periplasmic proteins and for the assembly of the periplasmic c-type cytochromes. Acts by transferring electrons from cytoplasmic thioredoxin to the periplasm. This transfer involves a cascade of disulfide bond formation and reduction steps. The sequence is that of Thiol:disulfide interchange protein DsbD from Haemophilus ducreyi (strain 35000HP / ATCC 700724).